Consider the following 67-residue polypeptide: Cysteine-rich venom protein bucarin (67 aa).

An SCP domain is found at 13 to 58; sequence VDKHNALRRSVRPTARNMLQMEWNSNAAQNAKRFADRCTFAHSPPH.

This sequence belongs to the CRISP family. In terms of processing, contains 8 disulfide bonds. Expressed by the venom gland.

The protein resides in the secreted. Blocks contraction of smooth muscle elicited by high potassium-induced depolarization, but does not block caffeine-stimulated contraction. May target voltage-gated calcium channels on smooth muscle. The sequence is that of Cysteine-rich venom protein bucarin from Bungarus candidus (Malayan krait).